Reading from the N-terminus, the 231-residue chain is Protein fmp52-2, mitochondrial (231 aa).

Residues 1-46 (MTMTTAAVFGCTGAVGSQILATLLAIDTFPSVKTISRRLPNVQSPK) constitute a mitochondrion transit peptide.

It belongs to the FMP52 family.

It localises to the mitochondrion outer membrane. This chain is Protein fmp52-2, mitochondrial (fmp522), found in Neosartorya fischeri (strain ATCC 1020 / DSM 3700 / CBS 544.65 / FGSC A1164 / JCM 1740 / NRRL 181 / WB 181) (Aspergillus fischerianus).